Here is a 156-residue protein sequence, read N- to C-terminus: Arginine repressor (156 aa).

It belongs to the ArgR family.

Its subcellular location is the cytoplasm. Its pathway is amino-acid biosynthesis; L-arginine biosynthesis [regulation]. Functionally, regulates arginine biosynthesis genes. This Escherichia coli O81 (strain ED1a) protein is Arginine repressor.